The chain runs to 300 residues: Dihydroorotate dehydrogenase B (NAD(+)), catalytic subunit (300 aa).

Residues serine 20 and 44–45 (KG) contribute to the FMN site. Substrate is bound by residues lysine 44 and 68–72 (NSVGL). Residues asparagine 98 and asparagine 124 each contribute to the FMN site. Asparagine 124 contributes to the substrate binding site. The active-site Nucleophile is cysteine 127. Lysine 162 and isoleucine 188 together coordinate FMN. Residue 189–190 (NT) coordinates substrate. FMN is bound by residues glycine 214, 240–241 (GG), and 262–263 (GT).

The protein belongs to the dihydroorotate dehydrogenase family. Type 1 subfamily. As to quaternary structure, heterotetramer of 2 PyrK and 2 PyrD type B subunits. The cofactor is FMN.

The protein resides in the cytoplasm. It catalyses the reaction (S)-dihydroorotate + NAD(+) = orotate + NADH + H(+). Its pathway is pyrimidine metabolism; UMP biosynthesis via de novo pathway; orotate from (S)-dihydroorotate (NAD(+) route): step 1/1. Catalyzes the conversion of dihydroorotate to orotate with NAD(+) as electron acceptor. This is Dihydroorotate dehydrogenase B (NAD(+)), catalytic subunit (pyrD) from Caldicellulosiruptor saccharolyticus (strain ATCC 43494 / DSM 8903 / Tp8T 6331).